Here is a 275-residue protein sequence, read N- to C-terminus: Dermonecrotic toxin SpaSicTox-betaIIA2 (275 aa).

Residue histidine 5 is part of the active site. Mg(2+)-binding residues include glutamate 25 and aspartate 27. The active-site Nucleophile is the histidine 41. Intrachain disulfides connect cysteine 45–cysteine 51 and cysteine 47–cysteine 190. Aspartate 85 contacts Mg(2+).

Belongs to the arthropod phospholipase D family. Class II subfamily. It depends on Mg(2+) as a cofactor. As to expression, expressed by the venom gland.

It is found in the secreted. The enzyme catalyses an N-(acyl)-sphingosylphosphocholine = an N-(acyl)-sphingosyl-1,3-cyclic phosphate + choline. It carries out the reaction an N-(acyl)-sphingosylphosphoethanolamine = an N-(acyl)-sphingosyl-1,3-cyclic phosphate + ethanolamine. The catalysed reaction is a 1-acyl-sn-glycero-3-phosphocholine = a 1-acyl-sn-glycero-2,3-cyclic phosphate + choline. It catalyses the reaction a 1-acyl-sn-glycero-3-phosphoethanolamine = a 1-acyl-sn-glycero-2,3-cyclic phosphate + ethanolamine. Dermonecrotic toxins cleave the phosphodiester linkage between the phosphate and headgroup of certain phospholipids (sphingolipid and lysolipid substrates), forming an alcohol (often choline) and a cyclic phosphate. This toxin acts on sphingomyelin (SM). It may also act on ceramide phosphoethanolamine (CPE), lysophosphatidylcholine (LPC) and lysophosphatidylethanolamine (LPE), but not on lysophosphatidylserine (LPS), and lysophosphatidylglycerol (LPG). It acts by transphosphatidylation, releasing exclusively cyclic phosphate products as second products. Induces dermonecrosis, hemolysis, increased vascular permeability, edema, inflammatory response, and platelet aggregation. The polypeptide is Dermonecrotic toxin SpaSicTox-betaIIA2 (Sicarius patagonicus (Six-eyed sand spider)).